The sequence spans 259 residues: Virion protein US10 homolog (259 aa).

A zinc finger lies at 162–174 (CAHWCCLGHAFGC).

It belongs to the herpesviridae US10 family. In terms of processing, phosphorylated.

Its subcellular location is the virion tegument. The protein resides in the host nucleus matrix. This is Virion protein US10 homolog from Equine herpesvirus 4 (strain 1942) (EHV-4).